We begin with the raw amino-acid sequence, 51 residues long: Small ribosomal subunit protein uS14 (51 aa).

Zn(2+) contacts are provided by cysteine 16, cysteine 19, cysteine 34, and cysteine 37.

This sequence belongs to the universal ribosomal protein uS14 family. Zinc-binding uS14 subfamily. As to quaternary structure, part of the 30S ribosomal subunit. Requires Zn(2+) as cofactor.

Its function is as follows. Binds 16S rRNA, required for the assembly of 30S particles. The chain is Small ribosomal subunit protein uS14 from Archaeoglobus fulgidus (strain ATCC 49558 / DSM 4304 / JCM 9628 / NBRC 100126 / VC-16).